The following is a 588-amino-acid chain: Aspartate--tRNA ligase (588 aa).

Residue glutamate 174 participates in L-aspartate binding. The aspartate stretch occupies residues 198–201; it reads QLFK. Residue arginine 220 participates in L-aspartate binding. ATP contacts are provided by residues 220–222 and glutamine 229; that span reads RDE. An L-aspartate-binding site is contributed by histidine 448. ATP is bound at residue glutamate 482. Residue arginine 489 participates in L-aspartate binding. 534–537 contributes to the ATP binding site; sequence GIDR.

It belongs to the class-II aminoacyl-tRNA synthetase family. Type 1 subfamily. As to quaternary structure, homodimer.

It localises to the cytoplasm. It catalyses the reaction tRNA(Asp) + L-aspartate + ATP = L-aspartyl-tRNA(Asp) + AMP + diphosphate. In terms of biological role, catalyzes the attachment of L-aspartate to tRNA(Asp) in a two-step reaction: L-aspartate is first activated by ATP to form Asp-AMP and then transferred to the acceptor end of tRNA(Asp). The sequence is that of Aspartate--tRNA ligase from Xanthomonas oryzae pv. oryzae (strain MAFF 311018).